The primary structure comprises 914 residues: Neutral alpha-glucosidase C (914 aa).

D511 acts as the Nucleophile in catalysis. The active site involves E514. D587 (proton donor) is an active-site residue.

Belongs to the glycosyl hydrolase 31 family.

The enzyme catalyses Hydrolysis of terminal, non-reducing (1-&gt;4)-linked alpha-D-glucose residues with release of alpha-D-glucose.. Has alpha-glucosidase activity. The protein is Neutral alpha-glucosidase C (GANC) of Homo sapiens (Human).